A 541-amino-acid polypeptide reads, in one-letter code: 2-hydroxyacylsphingosine 1-beta-galactosyltransferase (541 aa).

An N-terminal signal peptide occupies residues 1-20 (MKSYTPYFMLLWSAVGIARA). Asparagine 78, asparagine 333, and asparagine 442 each carry an N-linked (GlcNAc...) asparagine glycan. A helical transmembrane segment spans residues 472–492 (YFLLDIAFVLLLGAVLLYFIL). The segment at 518–541 (HYQNGIRNGKYKGNGRVKHEKKVR) is disordered. Residues 526–541 (GKYKGNGRVKHEKKVR) show a composition bias toward basic residues.

This sequence belongs to the UDP-glycosyltransferase family.

Its subcellular location is the membrane. It localises to the endoplasmic reticulum. It catalyses the reaction an N-acylsphing-4-enine + UDP-alpha-D-galactose = a beta-D-galactosyl-(1&lt;-&gt;1')-N-acylsphing-4-enine + UDP + H(+). The enzyme catalyses N-(2-hydroxy-hexanoyl)-sphing-4-enine + UDP-alpha-D-galactose = N-(2-hydroxy-hexanoyl)-beta-D-galactosyl-sphing-4-enine + UDP + H(+). The catalysed reaction is N-(2-hydroxy-hexanoyl)-sphinganine + UDP-alpha-D-galactose = N-(2-hydroxyhexanoyl)-beta-D-galactosylsphinganine + UDP + H(+). It carries out the reaction an N-acyl-sphingoid base + UDP-alpha-D-galactose = a D-galactosylceramide + UDP + H(+). The protein operates within sphingolipid metabolism; galactosylceramide biosynthesis. Catalyzes the transfer of galactose to ceramide, a key enzymatic step in the biosynthesis of galactocerebrosides, which are abundant sphingolipids of the myelin membrane of the central nervous system and peripheral nervous system. Galactosylates both hydroxy- and non-hydroxy fatty acid-containing ceramides and diglycerides. This Mus musculus (Mouse) protein is 2-hydroxyacylsphingosine 1-beta-galactosyltransferase.